Here is a 122-residue protein sequence, read N- to C-terminus: Large ribosomal subunit protein uL14 (122 aa).

Belongs to the universal ribosomal protein uL14 family. In terms of assembly, part of the 50S ribosomal subunit. Forms a cluster with proteins L3 and L19. In the 70S ribosome, L14 and L19 interact and together make contacts with the 16S rRNA in bridges B5 and B8.

Binds to 23S rRNA. Forms part of two intersubunit bridges in the 70S ribosome. The polypeptide is Large ribosomal subunit protein uL14 (Staphylococcus aureus (strain MW2)).